The following is a 330-amino-acid chain: tRNA-modifying protein YgfZ (330 aa).

Tryptophan 28 and tryptophan 192 together coordinate folate.

The protein belongs to the tRNA-modifying YgfZ family.

The protein resides in the cytoplasm. Folate-binding protein involved in regulating the level of ATP-DnaA and in the modification of some tRNAs. It is probably a key factor in regulatory networks that act via tRNA modification, such as initiation of chromosomal replication. In Blochmanniella pennsylvanica (strain BPEN), this protein is tRNA-modifying protein YgfZ.